The primary structure comprises 462 residues: MNKGTITQIISAVVDIAFKDELPAIYNALKVKLEDKELVLEVEQHLGNNVVRTVAMDSTDGLKRGMEVIDTGKPITIPVGKAVLGRILNVLGEPVDNQGPLNAETFLPIHREAPEFDDLETETEIFETGIKVIDLLAPYIKGGKIGLFGGAGVGKTVLIMELINNIAKGHGGISVFAGVGERTREGRDLYGEMTESGVITKTALVYGQMNEPPGARLRVALTGLTVAENFRDKDGQDVLLFIDNIFRFTQAGSEVSALLGRIPSAVGYQPNLATEMGALQERITSTKSGSITSVQAVYVPADDLTDPAPATTFSHLDATTVLSRNIASLGIYPAVDPLDSTSKALSEDVVGKEHYEVARKVQEVLQRYKELQDIIAILGMDELSDEDKLTVSRARKIERFFSQPFSVAEQFTGMEGKYVPVKETIRGFREILEGKHDDIPEQAFLYVGTIEEAVAKSKDLAK.

Residue 149–156 (GGAGVGKT) coordinates ATP.

It belongs to the ATPase alpha/beta chains family. F-type ATPases have 2 components, CF(1) - the catalytic core - and CF(0) - the membrane proton channel. CF(1) has five subunits: alpha(3), beta(3), gamma(1), delta(1), epsilon(1). CF(0) has three main subunits: a(1), b(2) and c(9-12). The alpha and beta chains form an alternating ring which encloses part of the gamma chain. CF(1) is attached to CF(0) by a central stalk formed by the gamma and epsilon chains, while a peripheral stalk is formed by the delta and b chains.

The protein resides in the cell inner membrane. The enzyme catalyses ATP + H2O + 4 H(+)(in) = ADP + phosphate + 5 H(+)(out). Its function is as follows. Produces ATP from ADP in the presence of a proton gradient across the membrane. The catalytic sites are hosted primarily by the beta subunits. In Fusobacterium nucleatum subsp. nucleatum (strain ATCC 25586 / DSM 15643 / BCRC 10681 / CIP 101130 / JCM 8532 / KCTC 2640 / LMG 13131 / VPI 4355), this protein is ATP synthase subunit beta.